The following is a 217-amino-acid chain: Adenylate kinase (217 aa).

12–17 (GAGKGS) serves as a coordination point for ATP. The tract at residues 32–61 (STGDMFRTHIKGSTPLGLEAKKYTDQGLLV) is NMP. AMP contacts are provided by residues Thr33, Arg38, 59–61 (LLV), 87–90 (GYPR), and Gln94. Residues 128 to 165 (GRRTCPVCGAIYHVDNYPPKVAGICDNDGATLVQRKDD) are LID. Residue Arg129 coordinates ATP. Zn(2+) contacts are provided by Cys132 and Cys135. Position 138–139 (138–139 (IY)) interacts with ATP. Residues Cys152 and Asp155 each contribute to the Zn(2+) site. The AMP site is built by Arg162 and Arg173. Gln201 contacts ATP.

Belongs to the adenylate kinase family. Monomer.

Its subcellular location is the cytoplasm. The catalysed reaction is AMP + ATP = 2 ADP. It functions in the pathway purine metabolism; AMP biosynthesis via salvage pathway; AMP from ADP: step 1/1. Its function is as follows. Catalyzes the reversible transfer of the terminal phosphate group between ATP and AMP. Plays an important role in cellular energy homeostasis and in adenine nucleotide metabolism. This Acholeplasma laidlawii (strain PG-8A) protein is Adenylate kinase.